A 399-amino-acid polypeptide reads, in one-letter code: Elongation factor Tu (399 aa).

In terms of domain architecture, tr-type G spans 10-204 (KPHVNIGTIG…AVDANIPEPE (195 aa)). The G1 stretch occupies residues 19 to 26 (GHVDHGKT). GTP is bound at residue 19–26 (GHVDHGKT). Residue T26 participates in Mg(2+) binding. Residues 60–64 (GITIN) are G2. Positions 81–84 (DCPG) are G3. GTP contacts are provided by residues 81–85 (DCPGH) and 136–139 (NKCD). Residues 136 to 139 (NKCD) form a G4 region. The tract at residues 174–176 (SGL) is G5.

It belongs to the TRAFAC class translation factor GTPase superfamily. Classic translation factor GTPase family. EF-Tu/EF-1A subfamily. In terms of assembly, monomer.

It localises to the cytoplasm. The catalysed reaction is GTP + H2O = GDP + phosphate + H(+). Its function is as follows. GTP hydrolase that promotes the GTP-dependent binding of aminoacyl-tRNA to the A-site of ribosomes during protein biosynthesis. The chain is Elongation factor Tu from Synechococcus sp. (strain WH7803).